A 1002-amino-acid chain; its full sequence is Lon protease homolog, mitochondrial (1002 aa).

A Lon N-terminal domain is found at 102 to 313 (VIALPLPHRP…LTLELVKKEM (212 aa)). Residue 468-475 (GPPGVGKT) coordinates ATP. Residues 811-995 (QTPVGVVMGL…NEIFDIAFQS (185 aa)) enclose the Lon proteolytic domain. Active-site residues include S901 and K944.

This sequence belongs to the peptidase S16 family. As to quaternary structure, homohexamer or homoheptamer. Organized in a ring with a central cavity.

The protein localises to the mitochondrion matrix. The catalysed reaction is Hydrolysis of proteins in presence of ATP.. In terms of biological role, ATP-dependent serine protease that mediates the selective degradation of misfolded, unassembled or oxidatively damaged polypeptides as well as certain short-lived regulatory proteins in the mitochondrial matrix. May also have a chaperone function in the assembly of inner membrane protein complexes. Participates in the regulation of mitochondrial gene expression and in the maintenance of the integrity of the mitochondrial genome. Binds to mitochondrial DNA in a site-specific manner. The polypeptide is Lon protease homolog, mitochondrial (Oryza sativa subsp. japonica (Rice)).